The chain runs to 301 residues: Ribonuclease Z (301 aa).

Residues histidine 63, histidine 65, aspartate 67, histidine 68, histidine 141, aspartate 204, and histidine 262 each contribute to the Zn(2+) site. Aspartate 67 functions as the Proton acceptor in the catalytic mechanism.

The protein belongs to the RNase Z family. As to quaternary structure, homodimer. The cofactor is Zn(2+).

It carries out the reaction Endonucleolytic cleavage of RNA, removing extra 3' nucleotides from tRNA precursor, generating 3' termini of tRNAs. A 3'-hydroxy group is left at the tRNA terminus and a 5'-phosphoryl group is left at the trailer molecule.. Zinc phosphodiesterase, which displays some tRNA 3'-processing endonuclease activity. Probably involved in tRNA maturation, by removing a 3'-trailer from precursor tRNA. The protein is Ribonuclease Z of Streptomyces coelicolor (strain ATCC BAA-471 / A3(2) / M145).